A 433-amino-acid chain; its full sequence is Enolase (433 aa).

Q167 contributes to the (2R)-2-phosphoglycerate binding site. E209 serves as the catalytic Proton donor. Mg(2+) contacts are provided by D246, E291, and D318. Residues K343, R372, S373, and K394 each coordinate (2R)-2-phosphoglycerate. The Proton acceptor role is filled by K343.

This sequence belongs to the enolase family. As to quaternary structure, component of the RNA degradosome, a multiprotein complex involved in RNA processing and mRNA degradation. Mg(2+) is required as a cofactor.

The protein resides in the cytoplasm. It is found in the secreted. It localises to the cell surface. The enzyme catalyses (2R)-2-phosphoglycerate = phosphoenolpyruvate + H2O. Its pathway is carbohydrate degradation; glycolysis; pyruvate from D-glyceraldehyde 3-phosphate: step 4/5. In terms of biological role, catalyzes the reversible conversion of 2-phosphoglycerate (2-PG) into phosphoenolpyruvate (PEP). It is essential for the degradation of carbohydrates via glycolysis. The sequence is that of Enolase from Tolumonas auensis (strain DSM 9187 / NBRC 110442 / TA 4).